The primary structure comprises 436 residues: Chromosomal replication initiator protein DnaA (436 aa).

A domain I, interacts with DnaA modulators region spans residues 1–80 (MSHEAVWQHV…QAPRFELRVV (80 aa)). Positions 80–100 (VPGVVVQEDIFQAAPAEAPRP) are domain II. The segment at 101-317 (KLNPKYTFEN…GALMRAIAFA (217 aa)) is domain III, AAA+ region. 4 residues coordinate ATP: G145, G147, K148, and T149. Residues 318-436 (SLNGVELTRA…LLRTLREACT (119 aa)) form a domain IV, binds dsDNA region.

The protein belongs to the DnaA family. In terms of assembly, oligomerizes as a right-handed, spiral filament on DNA at oriC.

It localises to the cytoplasm. Its function is as follows. Plays an essential role in the initiation and regulation of chromosomal replication. ATP-DnaA binds to the origin of replication (oriC) to initiate formation of the DNA replication initiation complex once per cell cycle. Binds the DnaA box (a 9 base pair repeat at the origin) and separates the double-stranded (ds)DNA. Forms a right-handed helical filament on oriC DNA; dsDNA binds to the exterior of the filament while single-stranded (ss)DNA is stabiized in the filament's interior. The ATP-DnaA-oriC complex binds and stabilizes one strand of the AT-rich DNA unwinding element (DUE), permitting loading of DNA polymerase. After initiation quickly degrades to an ADP-DnaA complex that is not apt for DNA replication. Binds acidic phospholipids. This Thermus thermophilus (strain ATCC BAA-163 / DSM 7039 / HB27) protein is Chromosomal replication initiator protein DnaA.